Here is a 341-residue protein sequence, read N- to C-terminus: L-threonine 3-dehydrogenase (341 aa).

Position 38 (C38) interacts with Zn(2+). Active-site charge relay system residues include T40 and H43. Zn(2+) is bound by residues H63, E64, C93, C96, C99, and C107. NAD(+)-binding positions include I175, D195, R200, 262–264 (LGI), and 286–287 (IY).

It belongs to the zinc-containing alcohol dehydrogenase family. As to quaternary structure, homotetramer. Zn(2+) serves as cofactor.

It is found in the cytoplasm. The enzyme catalyses L-threonine + NAD(+) = (2S)-2-amino-3-oxobutanoate + NADH + H(+). Its pathway is amino-acid degradation; L-threonine degradation via oxydo-reductase pathway; glycine from L-threonine: step 1/2. Its function is as follows. Catalyzes the NAD(+)-dependent oxidation of L-threonine to 2-amino-3-ketobutyrate. The protein is L-threonine 3-dehydrogenase of Shewanella oneidensis (strain ATCC 700550 / JCM 31522 / CIP 106686 / LMG 19005 / NCIMB 14063 / MR-1).